The sequence spans 157 residues: Aspartate carbamoyltransferase regulatory chain (157 aa).

Zn(2+)-binding residues include C108, C113, C138, and C141.

This sequence belongs to the PyrI family. In terms of assembly, contains catalytic and regulatory chains. The cofactor is Zn(2+).

Its function is as follows. Involved in allosteric regulation of aspartate carbamoyltransferase. This Ignicoccus hospitalis (strain KIN4/I / DSM 18386 / JCM 14125) protein is Aspartate carbamoyltransferase regulatory chain.